The sequence spans 282 residues: S-formylglutathione hydrolase (282 aa).

Residue alanine 2 is modified to N-acetylalanine. Lysine 4 is modified (N6-succinyllysine). Serine 149 (charge relay system) is an active-site residue. Residue lysine 200 is modified to N6-acetyllysine. Active-site charge relay system residues include aspartate 226 and histidine 260.

This sequence belongs to the esterase D family. Homodimer.

The protein localises to the cytoplasm. It is found in the cytoplasmic vesicle. It carries out the reaction S-formylglutathione + H2O = formate + glutathione + H(+). Functionally, serine hydrolase involved in the detoxification of formaldehyde. This is S-formylglutathione hydrolase (Esd) from Mus musculus (Mouse).